The chain runs to 241 residues: Endonuclease NucS (241 aa).

Belongs to the NucS endonuclease family.

It is found in the cytoplasm. Its function is as follows. Cleaves both 3' and 5' ssDNA extremities of branched DNA structures. This is Endonuclease NucS from Corynebacterium jeikeium (strain K411).